We begin with the raw amino-acid sequence, 952 residues long: Lysosomal alpha-glucosidase (952 aa).

Residues 1–27 form the signal peptide; it reads MRVRHPPCSRRLLAICALVSLATAALL. Positions 28 to 69 are excised as a propeptide; sequence GHILLHDFLLVPRELSGSSPVLEETHPAHQQGASRPGPRDAQ. The interval 47–80 is disordered; sequence PVLEETHPAHQQGASRPGPRDAQAHLGRPRAVPT. In terms of domain architecture, P-type spans 80-131; sequence TQCDVPPNSRFDCAPDKAITREQCDARGCCYIPAKQGLRGAQMGQPWCFFPP. Intrachain disulfides connect C82-C109, C92-C108, and C103-C127. N-linked (GlcNAc...) asparagine glycosylation is found at N140, N233, and N390. Residue D404 participates in substrate binding. An N-linked (GlcNAc...) asparagine glycan is attached at N470. D518 functions as the Nucleophile in the catalytic mechanism. E521 is an active-site residue. A disulfide bond links C533 and C558. Positions 600 and 616 each coordinate substrate. The cysteines at positions 647 and 658 are disulfide-linked. N-linked (GlcNAc...) asparagine glycosylation occurs at N652. H674 is a binding site for substrate. N-linked (GlcNAc...) asparagine glycosylation is found at N882 and N925.

Belongs to the glycosyl hydrolase 31 family.

It localises to the lysosome. Its subcellular location is the lysosome membrane. The catalysed reaction is Hydrolysis of terminal, non-reducing (1-&gt;4)-linked alpha-D-glucose residues with release of alpha-D-glucose.. Functionally, essential for the degradation of glycogen in lysosomes. Has highest activity on alpha-1,4-linked glycosidic linkages, but can also hydrolyze alpha-1,6-linked glucans. The polypeptide is Lysosomal alpha-glucosidase (GAA) (Pongo abelii (Sumatran orangutan)).